Reading from the N-terminus, the 84-residue chain is Putative movement protein (84 aa).

A helical transmembrane segment spans residues 15–35; that stretch reads ALHGILVAFIAVLCLIGCLWA.

In terms of assembly, interacts with the capsid protein (CP). Part of a MP-CP-viral DNA complex.

It localises to the host membrane. Functionally, involved in the viral transport within, and between cells. The sequence is that of Putative movement protein from Miscanthus streak virus (isolate 91) (MiSV).